The primary structure comprises 178 residues: MADRLTQLQICLDQLIQQFNSTINYVNTSAEPSLLDDDDVNSYSNMAANAPLPQSQQQRQQQKKQQEPQQEIEQPQQQSNPESKSISPPKEKVSFDNVINELCTDLILKSRQIKMLIDSLPGIGVTPNEQMNLINELSDKLQAIEEERIQKIKEKDNLLNLLESMIKEVVNGITETRI.

The segment at 36 to 91 (DDDDVNSYSNMAANAPLPQSQQQRQQQKKQQEPQQEIEQPQQQSNPESKSISPPKE) is disordered. The segment covering 67-85 (EPQQEIEQPQQQSNPESKS) has biased composition (low complexity). The stretch at 128–169 (NEQMNLINELSDKLQAIEEERIQKIKEKDNLLNLLESMIKEV) forms a coiled coil.

The protein belongs to the Mediator complex subunit 21 family. In terms of assembly, component of the Mediator complex.

It localises to the nucleus. Functionally, component of the Mediator complex, a coactivator involved in the regulated transcription of nearly all RNA polymerase II-dependent genes. Mediator functions as a bridge to convey information from gene-specific regulatory proteins to the basal RNA polymerase II transcription machinery. Mediator is recruited to promoters by direct interactions with regulatory proteins and serves as a scaffold for the assembly of a functional preinitiation complex with RNA polymerase II and the general transcription factors. This chain is Mediator of RNA polymerase II transcription subunit 21 (SRB7), found in Candida albicans (strain SC5314 / ATCC MYA-2876) (Yeast).